We begin with the raw amino-acid sequence, 186 residues long: Ribosome-recycling factor (186 aa).

The protein belongs to the RRF family.

It localises to the cytoplasm. In terms of biological role, responsible for the release of ribosomes from messenger RNA at the termination of protein biosynthesis. May increase the efficiency of translation by recycling ribosomes from one round of translation to another. The polypeptide is Ribosome-recycling factor (Polaromonas sp. (strain JS666 / ATCC BAA-500)).